A 206-amino-acid chain; its full sequence is Large ribosomal subunit protein uL22m (206 aa).

The transit peptide at 1–40 directs the protein to the mitochondrion; the sequence is MAAALLRELGALRVPNLRIWATQTLRVLPPSCIHTSASLD.

Belongs to the universal ribosomal protein uL22 family. In terms of assembly, component of the mitochondrial ribosome large subunit (39S) which comprises a 16S rRNA and about 50 distinct proteins.

The protein resides in the mitochondrion. The chain is Large ribosomal subunit protein uL22m (Mrpl22) from Mus musculus (Mouse).